The sequence spans 852 residues: Alanine--tRNA ligase (852 aa).

The Zn(2+) site is built by H554, H558, C656, and H660.

The protein belongs to the class-II aminoacyl-tRNA synthetase family. Zn(2+) is required as a cofactor.

Its subcellular location is the cytoplasm. It catalyses the reaction tRNA(Ala) + L-alanine + ATP = L-alanyl-tRNA(Ala) + AMP + diphosphate. Catalyzes the attachment of alanine to tRNA(Ala) in a two-step reaction: alanine is first activated by ATP to form Ala-AMP and then transferred to the acceptor end of tRNA(Ala). Also edits incorrectly charged Ser-tRNA(Ala) and Gly-tRNA(Ala) via its editing domain. The chain is Alanine--tRNA ligase from Campylobacter curvus (strain 525.92).